The sequence spans 513 residues: ATP synthase subunit alpha (513 aa).

Residue 169–176 (GDRQTGKT) participates in ATP binding.

This sequence belongs to the ATPase alpha/beta chains family. F-type ATPases have 2 components, CF(1) - the catalytic core - and CF(0) - the membrane proton channel. CF(1) has five subunits: alpha(3), beta(3), gamma(1), delta(1), epsilon(1). CF(0) has three main subunits: a(1), b(2) and c(9-12). The alpha and beta chains form an alternating ring which encloses part of the gamma chain. CF(1) is attached to CF(0) by a central stalk formed by the gamma and epsilon chains, while a peripheral stalk is formed by the delta and b chains.

It localises to the cell inner membrane. The catalysed reaction is ATP + H2O + 4 H(+)(in) = ADP + phosphate + 5 H(+)(out). In terms of biological role, produces ATP from ADP in the presence of a proton gradient across the membrane. The alpha chain is a regulatory subunit. The chain is ATP synthase subunit alpha from Mannheimia succiniciproducens (strain KCTC 0769BP / MBEL55E).